Here is a 245-residue protein sequence, read N- to C-terminus: High affinity immunoglobulin epsilon receptor subunit alpha (245 aa).

The N-terminal stretch at 1-23 is a signal peptide; it reads MDTGGSARLCLALVLISLGVMLT. Topologically, residues 24–204 are extracellular; that stretch reads ATQKSVVSLD…DYTIEYRWLQ (181 aa). Ig-like domains follow at residues 28–103 and 113–181; these read SVVS…KPVY and LQSS…LNKV. Cys-49 and Cys-91 are disulfide-bonded. 7 N-linked (GlcNAc...) asparagine glycosylation sites follow: Asn-52, Asn-53, Asn-58, Asn-65, Asn-123, Asn-158, and Asn-167. Cysteines 130 and 174 form a disulfide. The helical transmembrane segment at 205 to 223 threads the bilayer; that stretch reads LIFPSLAVILFAVDTGLWF. The Cytoplasmic segment spans residues 224-245; that stretch reads STHKQFESILKIQKTGKGKKKG.

In terms of assembly, tetramer of an alpha chain, a beta chain, and two disulfide linked gamma chains. Interacts with IGHE (via CH3 region). As to expression, expressed in leukocytes and pinealocytes at night (at protein level).

The protein localises to the cell membrane. It is found in the secreted. High-affinity receptor for immunoglobulin epsilon/IgE. Mediates IgE effector functions in myeloid cells. Upon IgE binding and antigen/allergen cross-linking initiates signaling pathways that lead to myeloid cell activation and differentiation. On mast cells, basophils and eosinophils stimulates the secretion of vasoactive amines, lipid mediators and cytokines that contribute to inflammatory response, tissue remodeling and cytotoxicity against microbes. Triggers the immediate hypersensitivity response to allergens as a host defense mechanism against helminth parasites, pathogenic bacteria and venom toxicity. When dysregulated, it can elicit harmful life-threatening allergic and anaphylactic reactions. In Rattus norvegicus (Rat), this protein is High affinity immunoglobulin epsilon receptor subunit alpha (Fcer1a).